Consider the following 196-residue polypeptide: Holliday junction branch migration complex subunit RuvA (196 aa).

The domain I stretch occupies residues 1–65 (MIGNLSGTVD…ENTTQLYGFI (65 aa)). The domain II stretch occupies residues 66–143 (NKEEQSCLRL…KLETNNNNFY (78 aa)). Positions 144-147 (PINE) are flexible linker. Residues 147–196 (EDAVSALINLGYEKTKVYDTIKKYKPNLDTKDIIRTALKELSNYEIDIMQ) form a domain III region.

Belongs to the RuvA family. Homotetramer. Forms an RuvA(8)-RuvB(12)-Holliday junction (HJ) complex. HJ DNA is sandwiched between 2 RuvA tetramers; dsDNA enters through RuvA and exits via RuvB. An RuvB hexamer assembles on each DNA strand where it exits the tetramer. Each RuvB hexamer is contacted by two RuvA subunits (via domain III) on 2 adjacent RuvB subunits; this complex drives branch migration. In the full resolvosome a probable DNA-RuvA(4)-RuvB(12)-RuvC(2) complex forms which resolves the HJ.

It localises to the cytoplasm. The RuvA-RuvB-RuvC complex processes Holliday junction (HJ) DNA during genetic recombination and DNA repair, while the RuvA-RuvB complex plays an important role in the rescue of blocked DNA replication forks via replication fork reversal (RFR). RuvA specifically binds to HJ cruciform DNA, conferring on it an open structure. The RuvB hexamer acts as an ATP-dependent pump, pulling dsDNA into and through the RuvAB complex. HJ branch migration allows RuvC to scan DNA until it finds its consensus sequence, where it cleaves and resolves the cruciform DNA. This chain is Holliday junction branch migration complex subunit RuvA, found in Wolbachia sp. subsp. Brugia malayi (strain TRS).